Here is a 432-residue protein sequence, read N- to C-terminus: MVTLKRLLAWISDLRIAIGLLFVIALSSALGTAIPQGELRDSYLEGYSDKPWLGFVNGSMILRLQLDHVYTSSWFLALLAWLGLALILCSWRRQWPALQAALQWIDYQEPRQLSKLAIAETISSPPKNESIDKLAAHLHQQGWQVQQQPGRLAARRGIIGRVGPMLVHLGLVLLMLGAVWGSLGGNRLEQFLAPGRSLDLLNRDGNSHLKLTLTNFGIERDPAGRPEQFRSQLELLEPGQDTAKLHEVSVNHPLRFHGLTVYQADWSLAAITLQLGRSPLLQLPLRTFPELGEQVWGLVLPTNPDGSEPVLLSLTSEAGPVQVFDATGERLASLRPAGPTAEVKGIPIRVVEVLPASGLLLKRDPGVPLVYIGFLITLVGGGLSMIATRQLWAVGDPENECLHVGGLCNRNLTGFANELPSLLASITPASQH.

A run of 3 helical transmembrane segments spans residues 14–34 (LRIA…GTAI), 72–92 (SSWF…CSWR), and 162–182 (VGPM…VWGS).

It belongs to the Ccs1/CcsB family. In terms of assembly, may interact with CcsA.

The protein localises to the cellular thylakoid membrane. Its function is as follows. Required during biogenesis of c-type cytochromes (cytochrome c6 and cytochrome f) at the step of heme attachment. The polypeptide is Cytochrome c biogenesis protein CcsB (Prochlorococcus marinus (strain MIT 9303)).